The following is a 156-amino-acid chain: Endogenous retrovirus group K member 7 Pro protein (156 aa).

The Peptidase A2 domain occupies 21 to 96 (FEGLVDTGAD…IPLNLWGRDL (76 aa)). Residue aspartate 26 is part of the active site. Residues 111–156 (YSPTSQKIMTKMGYIPGKGLGKNEDGIKVPVEAKINQEREGIGYPF) form the G-patch domain.

This sequence belongs to the peptidase A2 family. HERV class-II K(HML-2) subfamily. Active as a homodimer. In terms of processing, autoproteolytically processed at the N-terminus. Expected C-terminal autoprocessing not detected. The sequence shown is that of the processed Pro protein.

The catalysed reaction is Processing at the authentic HIV-1 PR recognition site and release of the mature p17 matrix and the p24 capsid protein, as a result of the cleavage of the -SQNY-|-PIVQ- cleavage site.. In terms of biological role, retroviral proteases have roles in processing of the primary translation products and the maturation of the viral particle. Endogenous Pro proteins may have kept, lost or modified their original function during evolution. This endogenous protein has retained most of the characteristics of retroviral proteases. This chain is Endogenous retrovirus group K member 7 Pro protein (ERVK-7), found in Homo sapiens (Human).